Here is a 242-residue protein sequence, read N- to C-terminus: NAD(P)H-hydrate epimerase (242 aa).

One can recognise a YjeF N-terminal domain in the interval Ala-11–Ser-221. (6S)-NADPHX is bound at residue Asn-61 to Asp-65. Asn-62 and Asp-128 together coordinate K(+). (6S)-NADPHX contacts are provided by residues Gly-132–Pro-138 and Asp-161. Residue Ser-164 coordinates K(+).

The protein belongs to the NnrE/AIBP family. K(+) is required as a cofactor.

It is found in the cytoplasm. It localises to the mitochondrion. Its subcellular location is the nucleus. It carries out the reaction (6R)-NADHX = (6S)-NADHX. The catalysed reaction is (6R)-NADPHX = (6S)-NADPHX. Catalyzes the epimerization of the S- and R-forms of NAD(P)HX, a damaged form of NAD(P)H that is a result of enzymatic or heat-dependent hydration. This is a prerequisite for the S-specific NAD(P)H-hydrate dehydratase to allow the repair of both epimers of NAD(P)HX. May have a role in meiosis. This is NAD(P)H-hydrate epimerase (mug182) from Schizosaccharomyces pombe (strain 972 / ATCC 24843) (Fission yeast).